The following is an 841-amino-acid chain: MLGILNKMFDPTKRALNKYEKIANDIDAVRGDYENLSDEALKHKTAEFKERLEKGETTDDLLVEAFAVVREASRRVTGMFPFKVQLMGGIALHEGNISEMKTGEGKTLTSTLPVYLNALTGKGVHVVTVNEYLASRDAQQMGEIFAFLGLTVGLNLNSMSKDEKREAYAADITYSTNNELGFDYLRDNMVLYKEQMVQRPLHFAVIDEVDSILVDEARTPLIISGQAQKSTKLYVQANAFVRTLKKDQDYTYDVKTKGVQLTEEGMTKAEKTFGIDNLFDVKNVALNHHINQALKAHAAMQKDVDYVVEDGQVVIVDSFTGRLMKGRRYSEGLHQAIEAKEGLEIQNESMTLATITFQNYFRMYEKLAGMTGTAKTEEEEFRNIYNMQVVSIPTNQPVIRDDRPDLIYRSMEGKFKAVAEDVAQRYMTGQPVLVGTVAVETSELISKLLKNKGIPHQVLNAKNHEREAQIIEEAGQKGAVTIATNMAGRGTDIKLGEGVKELGGLAVVGTERHESRRIDNQLRGRSGRQGDPGITQFYLSMEDELMRRFGAERTMAMLDRFGMDDSTPIQSKMVSRAVESSQKRVEGNNFDSRKQLLQYDDVLRQQREVIYKQRFEVIDSENLRDIVEGMIKSSLERAIAAYTPKEELPEEWNLDGLVELVNSTYLDEGALEKSDIFGKEPDEMHEMIMDRIMTKYNEKEENFGTEQMREFEKVIVLRAVDSKWMDHIDAMDQLRQGIHLRAYAQTNPLREYQMEGFAMFEHMIESIEDEVAKFVMKAEIESNLEREEVVQGQTTAHQPQDGDEAKQAKKAPVRKVVDIGRNAPCHCGSGKKYKNCCGRTE.

ATP-binding positions include Gln85, 103–107 (GEGKT), and Asp492. The disordered stretch occupies residues 786–812 (REEVVQGQTTAHQPQDGDEAKQAKKAP). The Zn(2+) site is built by Cys825, Cys827, Cys836, and Cys837.

This sequence belongs to the SecA family. In terms of assembly, monomer and homodimer. Part of the essential Sec protein translocation apparatus which comprises SecA, SecYEG and auxiliary proteins SecDF. Other proteins may also be involved. Requires Zn(2+) as cofactor.

It localises to the cell membrane. Its subcellular location is the cytoplasm. It catalyses the reaction ATP + H2O + cellular proteinSide 1 = ADP + phosphate + cellular proteinSide 2.. In terms of biological role, part of the Sec protein translocase complex. Interacts with the SecYEG preprotein conducting channel. Has a central role in coupling the hydrolysis of ATP to the transfer of proteins into and across the cell membrane, serving as an ATP-driven molecular motor driving the stepwise translocation of polypeptide chains across the membrane. The sequence is that of Protein translocase subunit SecA from Bacillus velezensis (strain DSM 23117 / BGSC 10A6 / LMG 26770 / FZB42) (Bacillus amyloliquefaciens subsp. plantarum).